We begin with the raw amino-acid sequence, 599 residues long: DNA primase (599 aa).

Residues 40–64 form a CHC2-type zinc finger; it reads CPFHGENTPSFSVSPDKQLYHCFGC. Residues 259 to 342 form the Toprim domain; sequence NEAVLFEGYV…KVAMIPDGLD (84 aa). Mg(2+) contacts are provided by E265, D309, and D311.

This sequence belongs to the DnaG primase family. As to quaternary structure, monomer. Interacts with DnaB. The cofactor is Zn(2+). It depends on Mg(2+) as a cofactor.

It carries out the reaction ssDNA + n NTP = ssDNA/pppN(pN)n-1 hybrid + (n-1) diphosphate.. RNA polymerase that catalyzes the synthesis of short RNA molecules used as primers for DNA polymerase during DNA replication. The protein is DNA primase of Halalkalibacterium halodurans (strain ATCC BAA-125 / DSM 18197 / FERM 7344 / JCM 9153 / C-125) (Bacillus halodurans).